Here is a 417-residue protein sequence, read N- to C-terminus: Serine hydroxymethyltransferase (417 aa).

Residues Leu122 and 126–128 each bind (6S)-5,6,7,8-tetrahydrofolate; that span reads GHL. An N6-(pyridoxal phosphate)lysine modification is found at Lys230. 355–357 contributes to the (6S)-5,6,7,8-tetrahydrofolate binding site; that stretch reads SPF.

It belongs to the SHMT family. Homodimer. It depends on pyridoxal 5'-phosphate as a cofactor.

The protein resides in the cytoplasm. It carries out the reaction (6R)-5,10-methylene-5,6,7,8-tetrahydrofolate + glycine + H2O = (6S)-5,6,7,8-tetrahydrofolate + L-serine. The protein operates within one-carbon metabolism; tetrahydrofolate interconversion. It participates in amino-acid biosynthesis; glycine biosynthesis; glycine from L-serine: step 1/1. Functionally, catalyzes the reversible interconversion of serine and glycine with tetrahydrofolate (THF) serving as the one-carbon carrier. This reaction serves as the major source of one-carbon groups required for the biosynthesis of purines, thymidylate, methionine, and other important biomolecules. Also exhibits THF-independent aldolase activity toward beta-hydroxyamino acids, producing glycine and aldehydes, via a retro-aldol mechanism. The chain is Serine hydroxymethyltransferase from Francisella tularensis subsp. tularensis (strain FSC 198).